We begin with the raw amino-acid sequence, 264 residues long: Phosphonoacetaldehyde hydrolase (264 aa).

The Nucleophile role is filled by aspartate 9. Mg(2+) is bound by residues aspartate 9 and alanine 11. The Schiff-base intermediate with substrate role is filled by lysine 50. Mg(2+) is bound at residue aspartate 183.

This sequence belongs to the HAD-like hydrolase superfamily. PhnX family. Homodimer. The cofactor is Mg(2+).

The enzyme catalyses phosphonoacetaldehyde + H2O = acetaldehyde + phosphate + H(+). Its function is as follows. Involved in phosphonate degradation. The polypeptide is Phosphonoacetaldehyde hydrolase (Bacillus cereus (strain ATCC 10987 / NRS 248)).